A 69-amino-acid polypeptide reads, in one-letter code: Amphipathic peptide StCT2 (69 aa).

Positions 1 to 23 are cleaved as a signal peptide; the sequence is MKTQFAVLIISMILMQMLVQTEA. The residue at position 37 (isoleucine 37) is an Isoleucine amide. A propeptide spanning residues 41 to 69 is cleaved from the precursor; that stretch reads SLRNQDQFDNMFDSDLSDADLKLLDDLFD.

This sequence belongs to the non-disulfide-bridged peptide (NDBP) superfamily. Short antimicrobial peptide (group 4) family. As to expression, expressed by the venom gland.

Its subcellular location is the secreted. It is found in the target cell membrane. Its function is as follows. Antimicrobial peptide that is rapidly bactericidal against Gram-positive bacteria. The chain is Amphipathic peptide StCT2 from Scorpiops tibetanus (Scorpion).